The following is a 149-amino-acid chain: Ribonuclease pancreatic alpha-type (149 aa).

The N-terminal stretch at 1–25 is a signal peptide; it reads MGLEKSFILFSLLVLVLGWVQPSLG. The substrate site is built by Lys-32 and Arg-35. His-37 (proton acceptor) is an active-site residue. 4 disulfide bridges follow: Cys-51–Cys-109, Cys-65–Cys-120, Cys-83–Cys-135, and Cys-90–Cys-97. Residues 66 to 70, Lys-91, and Arg-110 each bind substrate; that span reads KPVNT. The active-site Proton donor is His-144.

Belongs to the pancreatic ribonuclease family. In terms of assembly, monomer.

It is found in the secreted. It carries out the reaction an [RNA] containing cytidine + H2O = an [RNA]-3'-cytidine-3'-phosphate + a 5'-hydroxy-ribonucleotide-3'-[RNA].. It catalyses the reaction an [RNA] containing uridine + H2O = an [RNA]-3'-uridine-3'-phosphate + a 5'-hydroxy-ribonucleotide-3'-[RNA].. Functionally, endonuclease that catalyzes the cleavage of RNA on the 3' side of pyrimidine nucleotides. Acts on single-stranded and double-stranded RNA. The sequence is that of Ribonuclease pancreatic alpha-type from Rattus fuscipes (Bush rat).